The sequence spans 502 residues: Putative diacyglycerol O-acyltransferase MT1809 (502 aa).

The active-site Proton acceptor is His-174.

The protein belongs to the long-chain O-acyltransferase family.

The enzyme catalyses an acyl-CoA + a 1,2-diacyl-sn-glycerol = a triacyl-sn-glycerol + CoA. It functions in the pathway glycerolipid metabolism; triacylglycerol biosynthesis. The polypeptide is Putative diacyglycerol O-acyltransferase MT1809 (Mycobacterium tuberculosis (strain CDC 1551 / Oshkosh)).